A 421-amino-acid chain; its full sequence is Imidazolonepropionase (421 aa).

His-81 and His-83 together coordinate Fe(3+). Residues His-81 and His-83 each coordinate Zn(2+). Residues Arg-90, Tyr-153, and His-186 each coordinate 4-imidazolone-5-propanoate. Tyr-153 lines the N-formimidoyl-L-glutamate pocket. A Fe(3+)-binding site is contributed by His-251. Residue His-251 participates in Zn(2+) binding. Residue Glu-254 coordinates 4-imidazolone-5-propanoate. Asp-326 serves as a coordination point for Fe(3+). Residue Asp-326 coordinates Zn(2+). Asn-328 and Gly-330 together coordinate N-formimidoyl-L-glutamate. 4-imidazolone-5-propanoate is bound at residue Ser-331.

The protein belongs to the metallo-dependent hydrolases superfamily. HutI family. The cofactor is Zn(2+). Fe(3+) is required as a cofactor.

It is found in the cytoplasm. It carries out the reaction 4-imidazolone-5-propanoate + H2O = N-formimidoyl-L-glutamate. The protein operates within amino-acid degradation; L-histidine degradation into L-glutamate; N-formimidoyl-L-glutamate from L-histidine: step 3/3. In terms of biological role, catalyzes the hydrolytic cleavage of the carbon-nitrogen bond in imidazolone-5-propanoate to yield N-formimidoyl-L-glutamate. It is the third step in the universal histidine degradation pathway. This Streptococcus pyogenes serotype M28 (strain MGAS6180) protein is Imidazolonepropionase.